The following is a 1032-amino-acid chain: Exo-beta-D-glucosaminidase (1032 aa).

A signal peptide spans 1–32 (MSFRQKRTRIPLLAMTVTALAAAVCGVTTAPA). Positions 33–46 (ATGAEVAVPLSVGA) are excised as a propeptide. The active-site Proton donor is aspartate 469. Glutamate 541 functions as the Nucleophile in the catalytic mechanism. The tract at residues 883-908 (SVRISGWNTGTQTVPADGSGPGPSDP) is disordered. The region spanning 909–1032 (VDYQAEDATI…GGPNVDKITL (124 aa)) is the CBM6 domain.

Belongs to the glycosyl hydrolase 2 family. In terms of assembly, monomer.

It localises to the secreted. The enzyme catalyses Hydrolysis of chitosan or chitosan oligosaccharides to remove successive D-glucosamine residues from the non-reducing termini.. Hydrolyzes chitosan and chitooligosaccharides with retention of anomeric configuration. Has maximum activity on chitotetraose, chitopentaose and their corresponding alcohols, with a slight decrease in the rate of hydrolysis on longer chains. Has no activity against beta-D-glucopyranoside, beta-D-xylopyranoside, beta-D-mannoside, beta-D-glucuronide, beta-D-galactoside, beta-D-N-acetylgalactosamide, beta-D-N-acetylglucosaminide and alpha-D-N-acetylglucosaminide. This chain is Exo-beta-D-glucosaminidase, found in Amycolatopsis orientalis (Nocardia orientalis).